The primary structure comprises 517 residues: GMP synthase [glutamine-hydrolyzing] (517 aa).

Residues arginine 9–leucine 199 enclose the Glutamine amidotransferase type-1 domain. Cysteine 86 functions as the Nucleophile in the catalytic mechanism. Active-site residues include histidine 173 and glutamate 175. One can recognise a GMPS ATP-PPase domain in the interval tryptophan 200–arginine 392. Serine 227–serine 233 is a binding site for ATP.

In terms of assembly, homodimer.

The catalysed reaction is XMP + L-glutamine + ATP + H2O = GMP + L-glutamate + AMP + diphosphate + 2 H(+). It participates in purine metabolism; GMP biosynthesis; GMP from XMP (L-Gln route): step 1/1. Functionally, catalyzes the synthesis of GMP from XMP. The sequence is that of GMP synthase [glutamine-hydrolyzing] from Aliivibrio fischeri (strain ATCC 700601 / ES114) (Vibrio fischeri).